Reading from the N-terminus, the 224-residue chain is Small ribosomal subunit protein uS3 (224 aa).

A KH type-2 domain is found at leucine 38–arginine 106.

It belongs to the universal ribosomal protein uS3 family. As to quaternary structure, part of the 30S ribosomal subunit. Forms a tight complex with proteins S10 and S14.

Binds the lower part of the 30S subunit head. Binds mRNA in the 70S ribosome, positioning it for translation. The protein is Small ribosomal subunit protein uS3 of Anaeromyxobacter sp. (strain Fw109-5).